The sequence spans 447 residues: GTPase Era, mitochondrial (447 aa).

A mitochondrion-targeting transit peptide spans 1–18 (MTLRSCETFLRRSLRFST). The 232-residue stretch at 109–340 (KSLKVAIVGS…RYLFVAAKPC (232 aa)) folds into the Era-type G domain. Residues 117–124 (GSPNAGKS) form a G1 region. Residue 117 to 124 (GSPNAGKS) coordinates GTP. The tract at residues 143–147 (HTTRS) is G2. Positions 164–167 (DTPG) are G3. Residues 164 to 168 (DTPGL) and 233 to 236 (NKVD) each bind GTP. Residues 233-236 (NKVD) form a G4 region. The G5 stretch occupies residues 318–320 (LSS). The KH type-2 domain occupies 370–447 (LPKEVPYTMT…RLKISVKLRK (78 aa)).

The protein belongs to the TRAFAC class TrmE-Era-EngA-EngB-Septin-like GTPase superfamily. Era GTPase family.

The protein localises to the mitochondrion matrix. Its subcellular location is the mitochondrion inner membrane. Functionally, probable GTPase that plays a role in the mitochondrial ribosomal small subunit assembly. Specifically binds the 12S mitochondrial rRNA (12S mt-rRNA) to a 33 nucleotide section delineating the 3' terminal stem-loop region. May act as a chaperone that protects the 12S mt-rRNA on the 28S mitoribosomal subunit during ribosomal small subunit assembly. This Danio rerio (Zebrafish) protein is GTPase Era, mitochondrial (eral1).